The chain runs to 290 residues: Ubiquinone biosynthesis protein COQ4, mitochondrial (290 aa).

The transit peptide at 1-32 (MAKRVCVGDLRKLAGSVSTPSRCILPPHARCF) directs the protein to the mitochondrion. His-168, Asp-169, His-172, and Glu-184 together coordinate Zn(2+). The segment at 260-290 (KPPDLREMRKAEREAQKKDKEAKETMTRAAV) is disordered.

It belongs to the COQ4 family. As to quaternary structure, component of a multi-subunit COQ enzyme complex, composed of at least COQ3, COQ4, COQ5, COQ6, COQ7 and COQ9. Zn(2+) serves as cofactor.

The protein resides in the mitochondrion inner membrane. The enzyme catalyses a 4-hydroxy-3-methoxy-5-(all-trans-polyprenyl)benzoate + H(+) = a 2-methoxy-6-(all-trans-polyprenyl)phenol + CO2. It functions in the pathway cofactor biosynthesis; ubiquinone biosynthesis. Lyase that catalyzes the C1-decarboxylation of 4-hydroxy-3-methoxy-5-(all-trans-polyprenyl)benzoic acid into 2-methoxy-6-(all-trans-polyprenyl)phenol during ubiquinone biosynthesis. The protein is Ubiquinone biosynthesis protein COQ4, mitochondrial of Phaeosphaeria nodorum (strain SN15 / ATCC MYA-4574 / FGSC 10173) (Glume blotch fungus).